Reading from the N-terminus, the 216-residue chain is Thiamine-phosphate synthase (216 aa).

Residues 41–45 (QYREK) and N73 each bind 4-amino-2-methyl-5-(diphosphooxymethyl)pyrimidine. Mg(2+) contacts are provided by D74 and D93. A 4-amino-2-methyl-5-(diphosphooxymethyl)pyrimidine-binding site is contributed by S111. Position 137-139 (137-139 (TTT)) interacts with 2-[(2R,5Z)-2-carboxy-4-methylthiazol-5(2H)-ylidene]ethyl phosphate. Position 140 (K140) interacts with 4-amino-2-methyl-5-(diphosphooxymethyl)pyrimidine. 2-[(2R,5Z)-2-carboxy-4-methylthiazol-5(2H)-ylidene]ethyl phosphate contacts are provided by residues G168 and 188–189 (VS).

The protein belongs to the thiamine-phosphate synthase family. It depends on Mg(2+) as a cofactor.

The enzyme catalyses 2-[(2R,5Z)-2-carboxy-4-methylthiazol-5(2H)-ylidene]ethyl phosphate + 4-amino-2-methyl-5-(diphosphooxymethyl)pyrimidine + 2 H(+) = thiamine phosphate + CO2 + diphosphate. The catalysed reaction is 2-(2-carboxy-4-methylthiazol-5-yl)ethyl phosphate + 4-amino-2-methyl-5-(diphosphooxymethyl)pyrimidine + 2 H(+) = thiamine phosphate + CO2 + diphosphate. It catalyses the reaction 4-methyl-5-(2-phosphooxyethyl)-thiazole + 4-amino-2-methyl-5-(diphosphooxymethyl)pyrimidine + H(+) = thiamine phosphate + diphosphate. The protein operates within cofactor biosynthesis; thiamine diphosphate biosynthesis; thiamine phosphate from 4-amino-2-methyl-5-diphosphomethylpyrimidine and 4-methyl-5-(2-phosphoethyl)-thiazole: step 1/1. In terms of biological role, condenses 4-methyl-5-(beta-hydroxyethyl)thiazole monophosphate (THZ-P) and 2-methyl-4-amino-5-hydroxymethyl pyrimidine pyrophosphate (HMP-PP) to form thiamine monophosphate (TMP). The chain is Thiamine-phosphate synthase from Chloroflexus aurantiacus (strain ATCC 29366 / DSM 635 / J-10-fl).